The primary structure comprises 287 residues: Nucleotide-binding protein GM21_3387 (287 aa).

ATP is bound at residue 8-15 (GLSGSGKS). 59–62 (DIRS) provides a ligand contact to GTP.

This sequence belongs to the RapZ-like family.

Functionally, displays ATPase and GTPase activities. This Geobacter sp. (strain M21) protein is Nucleotide-binding protein GM21_3387.